The chain runs to 233 residues: UPF0502 protein Sden_2282 (233 aa).

The span at 178–198 (TQHQRPPQTPHLSSRTNVDNS) shows a compositional bias: polar residues. The segment at 178 to 204 (TQHQRPPQTPHLSSRTNVDNSYESDER) is disordered.

It belongs to the UPF0502 family.

This Shewanella denitrificans (strain OS217 / ATCC BAA-1090 / DSM 15013) protein is UPF0502 protein Sden_2282.